Reading from the N-terminus, the 210-residue chain is Imidazoleglycerol-phosphate dehydratase (210 aa).

The disordered stretch occupies residues 185-210 (PRRGGSIPSSKGVLEQAGDNNTEKSK).

The protein belongs to the imidazoleglycerol-phosphate dehydratase family.

Its subcellular location is the cytoplasm. The catalysed reaction is D-erythro-1-(imidazol-4-yl)glycerol 3-phosphate = 3-(imidazol-4-yl)-2-oxopropyl phosphate + H2O. Its pathway is amino-acid biosynthesis; L-histidine biosynthesis; L-histidine from 5-phospho-alpha-D-ribose 1-diphosphate: step 6/9. This chain is Imidazoleglycerol-phosphate dehydratase, found in Prochlorococcus marinus (strain SARG / CCMP1375 / SS120).